Reading from the N-terminus, the 191-residue chain is MAEPLLVVGLGNPGENYARTRHNLGFMVADLLAARLGAKFKVHKRSGAEVVTGRLAQRSVVLAKPRCYMNESGRQVAPLAKFYSVPPADLIVIHDELDLDFGRIRLKFGGGEGGHNGLRSVAAALGTKDFQRVRIGIGRPPGRKDPATFVLENFSSPERPEVPTICEQAADATELLVEIGLEPAQNRVHAW.

Tyr-17 contacts tRNA. The Proton acceptor role is filled by His-22. TRNA is bound by residues Tyr-68, Asn-70, and Asn-116.

The protein belongs to the PTH family. In terms of assembly, monomer.

The protein localises to the cytoplasm. The enzyme catalyses an N-acyl-L-alpha-aminoacyl-tRNA + H2O = an N-acyl-L-amino acid + a tRNA + H(+). Hydrolyzes ribosome-free peptidyl-tRNAs (with 1 or more amino acids incorporated), which drop off the ribosome during protein synthesis, or as a result of ribosome stalling. Its function is as follows. Catalyzes the release of premature peptidyl moieties from peptidyl-tRNA molecules trapped in stalled 50S ribosomal subunits, and thus maintains levels of free tRNAs and 50S ribosomes. This is Peptidyl-tRNA hydrolase from Mycobacterium marinum (strain ATCC BAA-535 / M).